A 2508-amino-acid chain; its full sequence is Male gametocyte surface protein P230p (2508 aa).

An N-terminal signal peptide occupies residues 1–34 (MFIYLFIYLFFKMDKKRTFYYLFFFFTFLVYVLY). N-linked (GlcNAc...) asparagine glycans are attached at residues asparagine 230, asparagine 254, asparagine 362, and asparagine 414. A 6-Cys 1 domain is found at 394–516 (KILGLSTNEK…GLGETSVDKD (123 aa)). Residues cysteine 443 and cysteine 493 are joined by a disulfide bond. Residues asparagine 601 and asparagine 674 are each glycosylated (N-linked (GlcNAc...) asparagine). 6-Cys domains are found at residues 676–800 (SVSF…IVKR), 831–1096 (ITYL…LKSF), 1099–1231 (PIEG…LELN), 1268–1428 (KKHI…IPQH), and 1433–1565 (KFYG…NEDI). Cysteine 680 and cysteine 700 are joined by a disulfide. A glycan (N-linked (GlcNAc...) asparagine) is linked at asparagine 703. Disulfide bonds link cysteine 714–cysteine 775 and cysteine 725–cysteine 773. N-linked (GlcNAc...) asparagine glycans are attached at residues asparagine 779, asparagine 849, asparagine 986, asparagine 995, asparagine 1065, and asparagine 1074. 2 disulfide bridges follow: cysteine 835/cysteine 856 and cysteine 871/cysteine 1072. Disulfide bonds link cysteine 1103-cysteine 1129, cysteine 1144-cysteine 1206, and cysteine 1157-cysteine 1204. N-linked (GlcNAc...) asparagine glycosylation is present at asparagine 1231. 5 cysteine pairs are disulfide-bonded: cysteine 1272–cysteine 1293, cysteine 1308–cysteine 1404, cysteine 1437–cysteine 1464, cysteine 1478–cysteine 1547, and cysteine 1488–cysteine 1545. N-linked (GlcNAc...) asparagine glycosylation is present at asparagine 1385. N-linked (GlcNAc...) asparagine glycosylation is found at asparagine 1525, asparagine 1550, asparagine 1567, asparagine 1750, asparagine 1755, and asparagine 1788. 2 6-Cys domains span residues 1656–1804 (KKKI…IKKN) and 1807–1984 (KILG…IVGD). Cysteine 1704 and cysteine 1782 form a disulfide bridge. Intrachain disulfides connect cysteine 1811-cysteine 1883, cysteine 1897-cysteine 1966, and cysteine 1908-cysteine 1964. 2 N-linked (GlcNAc...) asparagine glycosylation sites follow: asparagine 2016 and asparagine 2047. A disordered region spans residues 2081–2113 (SDEGDGYQADEDIGGEDDAEDVDGEGDDEDDNI). Residues 2082 to 2112 (DEGDGYQADEDIGGEDDAEDVDGEGDDEDDN) are compositionally biased toward acidic residues. N-linked (GlcNAc...) asparagine glycans are attached at residues asparagine 2143, asparagine 2211, asparagine 2239, and asparagine 2255. 2 consecutive 6-Cys domains span residues 2197 to 2354 (IINI…VKSN) and 2357 to 2481 (KIYG…YEPY). Intrachain disulfides connect cysteine 2361–cysteine 2386, cysteine 2400–cysteine 2461, and cysteine 2411–cysteine 2459.

It is found in the cell surface. Its subcellular location is the cell membrane. In terms of biological role, plays an essential role in male gamete fertility. Required for the binding to erythrocytes and thus, for the formation of exflagellation centers. The chain is Male gametocyte surface protein P230p (PFS230P) from Plasmodium falciparum (isolate 3D7).